A 199-amino-acid polypeptide reads, in one-letter code: Superoxide dismutase [Mn/Fe] 2 (199 aa).

Fe(3+) is bound by residues His-27, His-81, Asp-161, and His-165. Positions 27, 81, 161, and 165 each coordinate Mn(2+).

It belongs to the iron/manganese superoxide dismutase family. Homodimer. Can also form a heterodimer with SodA. Requires Mn(2+) as cofactor. The cofactor is Fe(3+).

It carries out the reaction 2 superoxide + 2 H(+) = H2O2 + O2. Destroys superoxide anion radicals which are normally produced within the cells and which are toxic to biological systems. Catalyzes the dismutation of superoxide anion radicals into O2 and H2O2 by successive reduction and oxidation of the transition metal ion at the active site. This Staphylococcus aureus (strain USA300) protein is Superoxide dismutase [Mn/Fe] 2 (sodM).